A 395-amino-acid polypeptide reads, in one-letter code: Aspergillopepsin-1 (395 aa).

The signal sequence occupies residues 1–20 (MVVFSKVTAVVVGLSTIVSA). Residues 21–70 (VPVVQPRKGFTINQVARPVTNKKTVNLPAVYANALTKYGGTVPDSVKAAA) constitute a propeptide, activation peptide. In terms of domain architecture, Peptidase A1 spans 86–392 (YLTPVKVGGT…DSQGPRLGFA (307 aa)). Residues aspartate 102 and aspartate 284 contribute to the active site. Cysteine 320 and cysteine 355 are joined by a disulfide.

The protein belongs to the peptidase A1 family. As to quaternary structure, monomer.

It is found in the secreted. It carries out the reaction Hydrolysis of proteins with broad specificity. Generally favors hydrophobic residues in P1 and P1', but also accepts Lys in P1, which leads to activation of trypsinogen. Does not clot milk.. Its function is as follows. Secreted aspartic endopeptidase that allows assimilation of proteinaceous substrates. The scissile peptide bond is attacked by a nucleophilic water molecule activated by two aspartic residues in the active site. Shows a broad primary substrate specificity. Favors hydrophobic residues at the P1 and P1' positions, but also accepts a lysine residue in the P1 position, leading to the activation of trypsinogen and chymotrypsinogen A. This is Aspergillopepsin-1 (pepA) from Aspergillus fumigatus (strain CBS 144.89 / FGSC A1163 / CEA10) (Neosartorya fumigata).